The following is a 404-amino-acid chain: MKREVKKVVLAYSGGLDTSVILKWLQDEYKCEVVTFTADIGQGEEVEPARAKALALGIKPENIFIDDLREEFVKDYVFPMFRANAIYEGEYLLGTSIARPLIAKRQVEIAHLTNADGVSHGATGKGNDQVRFEMGYLSKDSTLTVIAPWREWDLNSREKLLAYAEEHGIQIEKKGKKSPYSMDANLLHISYEGGILEDPNAEPEDSMWLWTTKPEDAPNTPEYITIGYENGDPVSLNGEKLTPATMLETLNKIAGKHGIGRADIVENRYVGMKSRGCYETPGGTIMLKGHRAIESITLDREEAHLKDELMPRYAKLIYNGFWFSPEREMLQAAIDTTQKNVKGSVKLKLYKGSVMVVGRSSEFSLFNPEYCTFEEDAVYDQKDAAGFIKLNALRFIIAGKARKK.

ATP is bound by residues 11–19 and A38; that span reads AYSGGLDTS. The L-citrulline site is built by Y91 and S96. G121 serves as a coordination point for ATP. L-aspartate-binding residues include T123, N127, and D128. L-citrulline is bound at residue N127. Residues R131, S181, S190, E266, and Y278 each coordinate L-citrulline.

It belongs to the argininosuccinate synthase family. Type 1 subfamily. Homotetramer.

It localises to the cytoplasm. It catalyses the reaction L-citrulline + L-aspartate + ATP = 2-(N(omega)-L-arginino)succinate + AMP + diphosphate + H(+). It participates in amino-acid biosynthesis; L-arginine biosynthesis; L-arginine from L-ornithine and carbamoyl phosphate: step 2/3. This chain is Argininosuccinate synthase, found in Sulfurimonas denitrificans (strain ATCC 33889 / DSM 1251) (Thiomicrospira denitrificans (strain ATCC 33889 / DSM 1251)).